The following is a 467-amino-acid chain: Dimethylamine methyltransferase MtbB2 (467 aa).

Residue O356 is a non-standard amino acid, pyrrolysine.

It belongs to the dimethylamine methyltransferase family.

It catalyses the reaction Co(I)-[dimethylamine-specific corrinoid protein] + dimethylamine + H(+) = methyl-Co(III)-[dimethylamine-specific corrinoid protein] + methylamine. The protein operates within one-carbon metabolism; methanogenesis from dimethylamine. Functionally, catalyzes the transfer of a methyl group from dimethylamine to the corrinoid cofactor of MtbC. This chain is Dimethylamine methyltransferase MtbB2 (mtbB2), found in Methanosarcina barkeri (strain Fusaro / DSM 804).